The primary structure comprises 344 residues: Hydrophobic dipeptide epimerase (344 aa).

Substrate is bound by residues T126 and 151-153 (KIK). 3 residues coordinate Mg(2+): D184, E210, and D235. Substrate-binding positions include K257 and 307–309 (DLD).

It belongs to the mandelate racemase/muconate lactonizing enzyme family. The cofactor is Mg(2+).

Dipeptide epimerase with a preference for hydrophobic substrates. Catalyzes the epimerization of L-Ala-L-Thr, L-Ala-L-Met, L-Ala-L-His, L-Ala-L-Phe, L-Ala-L-Tyr, L-Ala-L-Trp, L-Ile-L-Ala, L-Ile-L-Ser, L-Ile-L-Met, L-Ile-L-His, L-Ile-L-Phe, L-Ile-L-Tyr, L-Ile-L-Trp, L-Phe-L-Met, L-Phe-L-His, L-Phe-L-Phe, L-Phe-L-Tyr, L-Phe-L-Trp, L-Phe-L-Ser, L-Phe-L-Thr and L-Phe-L-Lys (in vitro). This Roseobacter litoralis (strain ATCC 49566 / DSM 6996 / JCM 21268 / NBRC 15278 / OCh 149) protein is Hydrophobic dipeptide epimerase.